The chain runs to 500 residues: Cytochrome P450 2D15 (500 aa).

A heme-binding site is contributed by cysteine 446.

Belongs to the cytochrome P450 family. It depends on heme as a cofactor. In terms of tissue distribution, liver. Also detected in several other tissues.

The protein localises to the endoplasmic reticulum membrane. It localises to the microsome membrane. The catalysed reaction is an organic molecule + reduced [NADPH--hemoprotein reductase] + O2 = an alcohol + oxidized [NADPH--hemoprotein reductase] + H2O + H(+). In terms of biological role, high activity for the hydroxylation of bunitrolol and imipramine; low activity on debrisoquine. The protein is Cytochrome P450 2D15 (CYP2D15) of Canis lupus familiaris (Dog).